Consider the following 177-residue polypeptide: Large ribosomal subunit protein uL6 (177 aa).

It belongs to the universal ribosomal protein uL6 family. As to quaternary structure, part of the 50S ribosomal subunit.

This protein binds to the 23S rRNA, and is important in its secondary structure. It is located near the subunit interface in the base of the L7/L12 stalk, and near the tRNA binding site of the peptidyltransferase center. The sequence is that of Large ribosomal subunit protein uL6 from Dichelobacter nodosus (strain VCS1703A).